We begin with the raw amino-acid sequence, 549 residues long: DNA ligase 1 (549 aa).

Residue Glu-212 participates in ATP binding. Lys-214 (N6-AMP-lysine intermediate) is an active-site residue. 6 residues coordinate ATP: Arg-219, Arg-234, Glu-264, Phe-310, Arg-387, and Lys-393.

This sequence belongs to the ATP-dependent DNA ligase family. Requires Mg(2+) as cofactor.

It catalyses the reaction ATP + (deoxyribonucleotide)n-3'-hydroxyl + 5'-phospho-(deoxyribonucleotide)m = (deoxyribonucleotide)n+m + AMP + diphosphate.. Its function is as follows. DNA ligase that seals nicks in double-stranded DNA during DNA replication, DNA recombination and DNA repair. This is DNA ligase 1 from Methanosarcina barkeri (strain Fusaro / DSM 804).